The sequence spans 409 residues: MSIISTRLNSIKPSPTLAVVKKTLELKKAGVDIIALGAGEPDFDTPDNIKEAAIKAIKDGFTKYTNVEGMPLLKQAIKDKFKRENNIDYELDEIIVSTGGKQVIYNLFMASLDKGDKVIIPAPYWVSYPDMVALSTGTPVFVNCGIENNFKLSAEALERSITDKTKWLIINSPSNPTGASYNFEELENIAKVLRKYPHVNVMSDDIYEHITFDDFKFYTLAQIAPDLKERIFTVNGVSKAYSMTGWRIGYGVGSKALIKAMTIIQSQSTSNPCSISQMAAIESLNGPQDYIKPNALNFQKKRDLALSILKRVKYFECYKPEGAFYLFVKCDKIFGHKTKSGKIIANSNDFAEYLLEEAKVAVVPGIAFGLEGYFRISYATSMEELEEACIRIERACGSISIKSSLRGDA.

Residues Gly-39, Trp-125, and Asn-175 each coordinate L-aspartate. Lys-239 carries the N6-(pyridoxal phosphate)lysine modification. Arg-375 is a binding site for L-aspartate.

The protein belongs to the class-I pyridoxal-phosphate-dependent aminotransferase family. As to quaternary structure, homodimer. Pyridoxal 5'-phosphate is required as a cofactor.

Its subcellular location is the cytoplasm. It catalyses the reaction L-aspartate + 2-oxoglutarate = oxaloacetate + L-glutamate. The catalysed reaction is L-arogenate + 2-oxoglutarate = prephenate + L-glutamate. Functionally, catalyzes the reversible conversion of aspartate and 2-oxoglutarate to glutamate and oxaloacetate. Can also transaminate prephenate in the presence of glutamate. The protein is Probable aspartate/prephenate aminotransferase (aatA) of Rickettsia felis (strain ATCC VR-1525 / URRWXCal2) (Rickettsia azadi).